We begin with the raw amino-acid sequence, 1302 residues long: RNA-directed RNA polymerase (1302 aa).

The region spanning 562–823 is the RdRp catalytic domain; that stretch reads VIVGDLEATG…QTHAKQGCYV (262 aa).

The protein belongs to the reoviridae RNA-directed RNA polymerase family.

It catalyses the reaction RNA(n) + a ribonucleoside 5'-triphosphate = RNA(n+1) + diphosphate. The polypeptide is RNA-directed RNA polymerase (Segment-1) (Antilocapra americana (Pronghorn)).